The sequence spans 143 residues: MAMTTASTVFVLPANVTSVAGASSSRSSVSFLPMRNAGSRLVVRAAEDPAPASSSSKDSPAAAAAPDGATATKPKPPPIGPKRGSKVKILRRESYWFKNVGSVVAVDQDPKTRYPVVVRFAKVNYANISTNNYALDEVEEVAA.

Residues 1-44 (MAMTTASTVFVLPANVTSVAGASSSRSSVSFLPMRNAGSRLVVR) constitute a chloroplast transit peptide. Residues 43–85 (VRAAEDPAPASSSSKDSPAAAAAPDGATATKPKPPPIGPKRGS) form a disordered region. A compositionally biased stretch (low complexity) spans 48 to 73 (DPAPASSSSKDSPAAAAAPDGATATK).

This sequence belongs to the PsaE family. Post-translationally, 2 isoforms may exist. With or without the N-terminal alanine.

The protein localises to the plastid. It is found in the chloroplast thylakoid membrane. Its function is as follows. Stabilizes the interaction between PsaC and the PSI core, assists the docking of the ferredoxin to PSI and interacts with ferredoxin-NADP oxidoreductase. In Arabidopsis thaliana (Mouse-ear cress), this protein is Photosystem I reaction center subunit IV A, chloroplastic (PSAE1).